The following is a 479-amino-acid chain: MNRNPDQNTLPNITLKIIETYLGRVPSVNEYHMLKLQARNIQKITVFNKDIFVSLVKKNKKRFFFDVDTSASEIKDRILSYFSKQTQTYNIGKLFTIIELQSVLVTTYTDILGVLTIKAPNVISSKISYNVTSMEELARDMLNSMNVAVIDKAKVMGRHNVSSLVKNVNKLMEEYLRRHNKSCICYGSYSLYLINPNIRYGDIDILQTNSRTFLIDLAFLIKFITGNNIILSKIPYLRNYMVIKDENDNHIIDSFNIRQDTMNIVPKIFIDNIYIVDPTFQLLNMIKMFSQIDRLEDLSKDPEKFNVRMATMLEYVRYTHGIVFDGTRNNMPMKCIIDENNRIVTVTTKDYFSFKKCLVYLDENVLSSDILDLNADTSCDFESVTNSVYLIHDNIMYTYFSNTILLSDKGKVHEISARGLCAHILLYQMLTSGEYKQCLSDLLNSMMNRDKIPIYSHTERDKKPGRHGFINIEKDIIVF.

Catalysis depends on residues aspartate 202 and aspartate 204. Residues aspartate 202, aspartate 204, and aspartate 253 each coordinate Ca(2+).

The protein belongs to the poxviridae poly(A) polymerase catalytic subunit family. Heterodimer of a large (catalytic) subunit and a small (regulatory) subunit.

It carries out the reaction RNA(n) + ATP = RNA(n)-3'-adenine ribonucleotide + diphosphate. Polymerase that creates the 3'-poly(A) tail of mRNA's. In Cynomys gunnisoni (Gunnison's prairie dog), this protein is Poly(A) polymerase catalytic subunit (OPG063).